The following is a 106-amino-acid chain: Small ribosomal subunit protein bS6 (106 aa).

Belongs to the bacterial ribosomal protein bS6 family.

In terms of biological role, binds together with bS18 to 16S ribosomal RNA. The sequence is that of Small ribosomal subunit protein bS6 from Cyanothece sp. (strain PCC 7425 / ATCC 29141).